A 342-amino-acid polypeptide reads, in one-letter code: Replication factor C subunit 4 (342 aa).

Residues V24, V36, 61–68, N157, and R215 contribute to the ATP site; that span reads GMPGIGKT.

It belongs to the activator 1 small subunits family. As to quaternary structure, heteropentamer of subunits rfc1, rfc2, rfc3, rfc4 and rfc5 that forms a complex (RFC) with PCNA in the presence of ATP. Two other complexes exist where rfc1 can be replaced by either ctf18 or elg1 to form the ctf18-RFC or the elg1-RFC complexes respectively.

The protein resides in the nucleus. Its function is as follows. The elongation of primed DNA templates by DNA polymerase delta and epsilon requires the action of the accessory proteins PCNA and activator 1. The sequence is that of Replication factor C subunit 4 (rfc4) from Schizosaccharomyces pombe (strain 972 / ATCC 24843) (Fission yeast).